The sequence spans 72 residues: Large ribosomal subunit protein bL31 (72 aa).

Cys16, Cys18, Cys38, and Cys41 together coordinate Zn(2+).

This sequence belongs to the bacterial ribosomal protein bL31 family. Type A subfamily. In terms of assembly, part of the 50S ribosomal subunit. Requires Zn(2+) as cofactor.

Its function is as follows. Binds the 23S rRNA. In Aromatoleum aromaticum (strain DSM 19018 / LMG 30748 / EbN1) (Azoarcus sp. (strain EbN1)), this protein is Large ribosomal subunit protein bL31.